A 352-amino-acid chain; its full sequence is MVHDFDPFALRISGDFGIRWYGLSYMMGFICAYILITWLAKRQRAGLSVQMVGDFITYAAIGTLVGGRLGYVLFYGPDLFLKFKSEFPYWGVLAVNEGGMASHGGIIGIVIACLLYARKYSVNSLYLLDLVAVTGPIGVFFGRIANFINGELVGRPCDPTYPLAVKFPQDIVSWPGQEAAKLTELVPVVEKVGVGREQWLELVDKFRFDMAAREQLYATLNKVIESIQDGNTAAKEAIAPLLTPRYPSQLFAAFGEGLLIFMFLFFLWRKPRKPGFIAACFVLIYAVVRVVDEHFRMPDAHIGFQALGLTRGQWLSLAMFVVGLILMVVWTRAASLKIPGWQRGHSIKLNRK.

The next 4 helical transmembrane spans lie at 20 to 40 (WYGLSYMMGFICAYILITWLA), 55 to 75 (FITYAAIGTLVGGRLGYVLFY), 97 to 117 (EGGMASHGGIIGIVIACLLYA), and 122 to 142 (VNSLYLLDLVAVTGPIGVFFG). R143 contacts a 1,2-diacyl-sn-glycero-3-phospho-(1'-sn-glycerol). 3 helical membrane-spanning segments follow: residues 248–268 (SQLFAAFGEGLLIFMFLFFLW), 275–295 (GFIAACFVLIYAVVRVVDEHF), and 314–334 (WLSLAMFVVGLILMVVWTRAA).

The protein belongs to the Lgt family.

The protein localises to the cell inner membrane. The catalysed reaction is L-cysteinyl-[prolipoprotein] + a 1,2-diacyl-sn-glycero-3-phospho-(1'-sn-glycerol) = an S-1,2-diacyl-sn-glyceryl-L-cysteinyl-[prolipoprotein] + sn-glycerol 1-phosphate + H(+). The protein operates within protein modification; lipoprotein biosynthesis (diacylglyceryl transfer). Catalyzes the transfer of the diacylglyceryl group from phosphatidylglycerol to the sulfhydryl group of the N-terminal cysteine of a prolipoprotein, the first step in the formation of mature lipoproteins. The chain is Phosphatidylglycerol--prolipoprotein diacylglyceryl transferase from Bdellovibrio bacteriovorus (strain ATCC 15356 / DSM 50701 / NCIMB 9529 / HD100).